A 317-amino-acid chain; its full sequence is Putative cuticle collagen 80 (317 aa).

Positions Cys-80 to Gly-262 are disordered. Triple-helical region stretches follow at residues Gly-92–Ala-124, Gly-137–Arg-199, and Gly-202–Asp-264. Low complexity-rich tracts occupy residues Gln-108–Ala-124, Pro-135–Pro-145, and Ala-175–Pro-206. Pro residues-rich tracts occupy residues Ser-207–Pro-219 and Pro-230–Asn-240. Positions Gln-242–Gly-262 are enriched in low complexity.

Belongs to the cuticular collagen family. Collagen polypeptide chains are complexed within the cuticle by disulfide bonds and other types of covalent cross-links.

Functionally, nematode cuticles are composed largely of collagen-like proteins. The cuticle functions both as an exoskeleton and as a barrier to protect the worm from its environment. The protein is Putative cuticle collagen 80 (col-80) of Caenorhabditis elegans.